A 531-amino-acid polypeptide reads, in one-letter code: Probable mitochondrial-processing peptidase subunit beta, mitochondrial (531 aa).

A mitochondrion-targeting transit peptide spans 1-78 (MAMKNLLSLA…ENPDKRFLKY (78 aa)). The interval 30–50 (SAIDSVPASASPTALSPPPPH) is disordered. His-141 lines the Zn(2+) pocket. Glu-144 functions as the Proton acceptor in the catalytic mechanism. His-145 contacts Zn(2+). Glu-214 is a catalytic residue. Glu-221 provides a ligand contact to Zn(2+).

Belongs to the peptidase M16 family. In terms of assembly, heterodimer of an alpha subunit and a beta subunit subunits, forming the mitochondrial processing protease (MPP) in which the alpha subunit is involved in substrate recognition and binding and the beta subunit is the catalytic subunit. Component of the ubiquinol-cytochrome c oxidoreductase (cytochrome b-c1 complex, complex III, CIII), a multisubunit enzyme composed of 10 subunits. The complex is composed of 3 respiratory subunits cytochrome b (MT-CYB), cytochrome c1 (CYC1-1 or CYC1-2) and Rieske protein (UCR1-1 or UCR1-2), 2 core protein subunits MPPalpha1 (or MPPalpha2) and MPPB, and 5 low-molecular weight protein subunits QCR7-1 (or QCR7-2), UCRQ-1 (or UCRQ-2), QCR9, UCRY and probably QCR6-1 (or QCR6-2). The complex exists as an obligatory dimer and forms supercomplexes (SCs) in the inner mitochondrial membrane with NADH-ubiquinone oxidoreductase (complex I, CI), resulting in different assemblies (supercomplexes SCI(1)III(2) and SCI(2)III(4)). Zn(2+) serves as cofactor.

It is found in the mitochondrion. Its subcellular location is the mitochondrion inner membrane. The enzyme catalyses Release of N-terminal transit peptides from precursor proteins imported into the mitochondrion, typically with Arg in position P2.. Its activity is regulated as follows. Binding to the alpha subunit is required for catalytic activity. Its function is as follows. Catalytic subunit of the essential mitochondrial processing protease (MPP), which cleaves the mitochondrial sequence off newly imported precursors proteins. Preferentially, cleaves after an arginine at position P2. Component of the ubiquinol-cytochrome c oxidoreductase, a multisubunit transmembrane complex that is part of the mitochondrial electron transport chain which drives oxidative phosphorylation. The respiratory chain contains 3 multisubunit complexes succinate dehydrogenase (complex II, CII), ubiquinol-cytochrome c oxidoreductase (cytochrome b-c1 complex, complex III, CIII) and cytochrome c oxidase (complex IV, CIV), that cooperate to transfer electrons derived from NADH and succinate to molecular oxygen, creating an electrochemical gradient over the inner membrane that drives transmembrane transport and the ATP synthase. The cytochrome b-c1 complex catalyzes electron transfer from ubiquinol to cytochrome c, linking this redox reaction to translocation of protons across the mitochondrial inner membrane, with protons being carried across the membrane as hydrogens on the quinol. In the process called Q cycle, 2 protons are consumed from the matrix, 4 protons are released into the intermembrane space and 2 electrons are passed to cytochrome c. The protein is Probable mitochondrial-processing peptidase subunit beta, mitochondrial (MPPbeta) of Arabidopsis thaliana (Mouse-ear cress).